A 330-amino-acid polypeptide reads, in one-letter code: CRISPR-associated endonuclease Cas1 2 (330 aa).

Mn(2+) is bound by residues Glu-156, His-222, and Glu-237.

Belongs to the CRISPR-associated endonuclease Cas1 family. Homodimer, forms a heterotetramer with a Cas2 homodimer. Mg(2+) is required as a cofactor. The cofactor is Mn(2+).

Functionally, CRISPR (clustered regularly interspaced short palindromic repeat), is an adaptive immune system that provides protection against mobile genetic elements (viruses, transposable elements and conjugative plasmids). CRISPR clusters contain spacers, sequences complementary to antecedent mobile elements, and target invading nucleic acids. CRISPR clusters are transcribed and processed into CRISPR RNA (crRNA). Acts as a dsDNA endonuclease. Involved in the integration of spacer DNA into the CRISPR cassette. The polypeptide is CRISPR-associated endonuclease Cas1 2 (Thermodesulfovibrio yellowstonii (strain ATCC 51303 / DSM 11347 / YP87)).